The chain runs to 350 residues: GTPase Obg (350 aa).

In terms of domain architecture, Obg spans 1–159 (MRFIDQTEIF…FRLHLELKLL (159 aa)). The 169-residue stretch at 160–328 (AEVGIIGLPN…LLQQVWEELD (169 aa)) folds into the OBG-type G domain. Residues 166 to 173 (GLPNAGKS), 191 to 195 (FTTLI), 213 to 216 (DIPG), 280 to 283 (NKID), and 309 to 311 (SAV) each bind GTP. 2 residues coordinate Mg(2+): Ser173 and Thr193.

This sequence belongs to the TRAFAC class OBG-HflX-like GTPase superfamily. OBG GTPase family. In terms of assembly, monomer. Mg(2+) is required as a cofactor.

The protein localises to the cytoplasm. Its function is as follows. An essential GTPase which binds GTP, GDP and possibly (p)ppGpp with moderate affinity, with high nucleotide exchange rates and a fairly low GTP hydrolysis rate. Plays a role in control of the cell cycle, stress response, ribosome biogenesis and in those bacteria that undergo differentiation, in morphogenesis control. The chain is GTPase Obg from Acaryochloris marina (strain MBIC 11017).